A 227-amino-acid chain; its full sequence is 2,3-bisphosphoglycerate-dependent phosphoglycerate mutase (227 aa).

Residues 7 to 14 (RHGFSEWN), 20 to 21 (TG), Arg-59, 86 to 89 (ERHY), Lys-97, 113 to 114 (RR), and 182 to 183 (GN) each bind substrate. Residue His-8 is the Tele-phosphohistidine intermediate of the active site. Glu-86 serves as the catalytic Proton donor/acceptor.

It belongs to the phosphoglycerate mutase family. BPG-dependent PGAM subfamily. As to quaternary structure, homodimer.

It carries out the reaction (2R)-2-phosphoglycerate = (2R)-3-phosphoglycerate. Its pathway is carbohydrate degradation; glycolysis; pyruvate from D-glyceraldehyde 3-phosphate: step 3/5. Catalyzes the interconversion of 2-phosphoglycerate and 3-phosphoglycerate. The chain is 2,3-bisphosphoglycerate-dependent phosphoglycerate mutase from Haemophilus influenzae (strain PittGG).